The primary structure comprises 1273 residues: Clustered mitochondria protein homolog (1273 aa).

One can recognise a Clu domain in the interval 344–599 (PANNADYSRM…NTYPLDVKFA (256 aa)). TPR repeat units follow at residues 981–1013 (SDQKWAEGSMLLNEDQNAALTLFAQAIAIKEEV), 1022–1055 (AEKYLTLSTVYSKLGLTPEAVAFCRKSCAIYERV), and 1151–1184 (ATLESRIGNLYASINDFHNAMEHISKTPRIFTRE). 2 disordered regions span residues 1217 to 1242 (AEQASVNSGSRKKNVNQKADAPKAEL) and 1254 to 1273 (IEGGSTEKSKKKSSKKKGKK). Basic residues predominate over residues 1262 to 1273 (SKKKSSKKKGKK).

It belongs to the CLU family. In terms of assembly, may associate with the eukaryotic translation initiation factor 3 (eIF-3) complex.

The protein localises to the cytoplasm. Functionally, mRNA-binding protein involved in proper cytoplasmic distribution of mitochondria. This chain is Clustered mitochondria protein homolog, found in Vanderwaltozyma polyspora (strain ATCC 22028 / DSM 70294 / BCRC 21397 / CBS 2163 / NBRC 10782 / NRRL Y-8283 / UCD 57-17) (Kluyveromyces polysporus).